Reading from the N-terminus, the 377-residue chain is Phosphatidylglycerol--prolipoprotein diacylglyceryl transferase (377 aa).

4 consecutive transmembrane segments (helical) span residues 18–38 (PVPLRAYALMIIIGIVVAVVV), 48–68 (MDPALAGEIAYWAVPFGIVGA), 93–113 (IWNGGLGIWGAIAGGALGAWL), and 119–139 (GISLALFADAAAPGIILAQAI). Residue Arg141 participates in a 1,2-diacyl-sn-glycero-3-phospho-(1'-sn-glycerol) binding. The next 3 helical transmembrane spans lie at 177 to 197 (QPTFLYEFLWNLVVAAILLLV), 208 to 228 (LFALYVALYTFGRLWIEMLRI), and 238 to 258 (RVNIWTSAIVCVGAVVALLVV). The interval 265–377 (DVSPQEQRAL…RTRVERPPAT (113 aa)) is disordered. Low complexity-rich tracts occupy residues 288–297 (AAGETAGETR) and 308–344 (GVDVNGADVDGADPSNVNGANVNGADPVNVNVNDADG).

The protein belongs to the Lgt family.

Its subcellular location is the cell membrane. It carries out the reaction L-cysteinyl-[prolipoprotein] + a 1,2-diacyl-sn-glycero-3-phospho-(1'-sn-glycerol) = an S-1,2-diacyl-sn-glyceryl-L-cysteinyl-[prolipoprotein] + sn-glycerol 1-phosphate + H(+). The protein operates within protein modification; lipoprotein biosynthesis (diacylglyceryl transfer). Catalyzes the transfer of the diacylglyceryl group from phosphatidylglycerol to the sulfhydryl group of the N-terminal cysteine of a prolipoprotein, the first step in the formation of mature lipoproteins. The protein is Phosphatidylglycerol--prolipoprotein diacylglyceryl transferase of Frankia alni (strain DSM 45986 / CECT 9034 / ACN14a).